We begin with the raw amino-acid sequence, 155 residues long: MTIYEGTYIGSGLRIAIVVSRWNDLITNRLLEGARDGLLRHGVAADHIDIAWVPGSFELPLVCHRLAESSRYDAIIALGAVIRGATTHHEHVAAAASSGIAQVSLQTGVPCIFGVITTDNIEQAIERAGTKAGNKGFEAATAAIEMATLLQRLNG.

5-amino-6-(D-ribitylamino)uracil contacts are provided by residues Trp-22, 56-58, and 80-82; these read SFE and AVI. 85 to 86 provides a ligand contact to (2S)-2-hydroxy-3-oxobutyl phosphate; it reads AT. His-88 (proton donor) is an active-site residue. Residue Phe-113 coordinates 5-amino-6-(D-ribitylamino)uracil. Arg-127 contributes to the (2S)-2-hydroxy-3-oxobutyl phosphate binding site.

It belongs to the DMRL synthase family.

It catalyses the reaction (2S)-2-hydroxy-3-oxobutyl phosphate + 5-amino-6-(D-ribitylamino)uracil = 6,7-dimethyl-8-(1-D-ribityl)lumazine + phosphate + 2 H2O + H(+). The protein operates within cofactor biosynthesis; riboflavin biosynthesis; riboflavin from 2-hydroxy-3-oxobutyl phosphate and 5-amino-6-(D-ribitylamino)uracil: step 1/2. Functionally, catalyzes the formation of 6,7-dimethyl-8-ribityllumazine by condensation of 5-amino-6-(D-ribitylamino)uracil with 3,4-dihydroxy-2-butanone 4-phosphate. This is the penultimate step in the biosynthesis of riboflavin. The chain is 6,7-dimethyl-8-ribityllumazine synthase from Chloroflexus aurantiacus (strain ATCC 29364 / DSM 637 / Y-400-fl).